The chain runs to 395 residues: MRDKGDYLFTSESVSEGHPDKVADRISDTVLDAFLAADPYARVACETLVTTNRIVLAGETRGPSTITREYLAHLARLAVHDIGYEQEGFSWRDAKIDVLLHEQSVDIAVGVDAAGNKDEGAGDQGIMFGYACSETDALMPAPIYYAHLILRRMTELRKIGDARAAGLLPDAKSQVTLRYADGKPVGTTSIVVSTQHEDGMSQDEIKAMLRPLVTELLPDGWMCPDDQFYVNPTGKFVIGGPDGDCGLTGRKIIVDTYGGAAPHGGGAFSGKDPTKVDRSAAYMCRYLAKNVVAAGLATRCTIQVSYAIGVSHPLSVYVDMHGTERDVDHARLETVLRELVNLTPRGIREHLHLNRPIYVPTSAYGHFGREPDDRLGTFTWEKTDLAPALKAAFGR.

Histidine 18 contributes to the ATP binding site. Position 20 (aspartate 20) interacts with Mg(2+). A K(+)-binding site is contributed by glutamate 46. The L-methionine site is built by glutamate 59 and glutamine 103. Residues 103–113 are flexible loop; sequence QSVDIAVGVDA. Residues 170-172, 235-236, aspartate 244, 250-251, alanine 267, and lysine 271 contribute to the ATP site; these read DAK, KF, and RK. Residue aspartate 244 coordinates L-methionine. Residue lysine 275 participates in L-methionine binding.

It belongs to the AdoMet synthase family. Homotetramer; dimer of dimers. The cofactor is Mg(2+). It depends on K(+) as a cofactor.

The protein resides in the cytoplasm. The enzyme catalyses L-methionine + ATP + H2O = S-adenosyl-L-methionine + phosphate + diphosphate. Its pathway is amino-acid biosynthesis; S-adenosyl-L-methionine biosynthesis; S-adenosyl-L-methionine from L-methionine: step 1/1. Catalyzes the formation of S-adenosylmethionine (AdoMet) from methionine and ATP. The overall synthetic reaction is composed of two sequential steps, AdoMet formation and the subsequent tripolyphosphate hydrolysis which occurs prior to release of AdoMet from the enzyme. The protein is S-adenosylmethionine synthase of Acidiphilium cryptum (strain JF-5).